We begin with the raw amino-acid sequence, 514 residues long: Cytochrome P450 monooxygenase ptmQ (514 aa).

Residues 3 to 23 form a helical membrane-spanning segment; sequence YVAQSPWIATLIVTATTYCTL. N-linked (GlcNAc...) asparagine glycosylation is present at asparagine 148. Cysteine 452 is a binding site for heme. Asparagine 486 is a glycosylation site (N-linked (GlcNAc...) asparagine).

Belongs to the cytochrome P450 family. Requires heme as cofactor.

Its subcellular location is the membrane. The protein operates within secondary metabolite biosynthesis. Its function is as follows. Cytochrome P450 monooxygenase; part of the gene cluster that mediates the biosynthesis of the indole diterpenes penitrems. The geranylgeranyl diphosphate (GGPP) synthase ptmG catalyzes the first step in penitrem biosynthesis via conversion of farnesyl pyrophosphate and isopentyl pyrophosphate into geranylgeranyl pyrophosphate (GGPP). Condensation of indole-3-glycerol phosphate with GGPP by the prenyl transferase ptmC then forms 3-geranylgeranylindole (3-GGI). Epoxidation by the FAD-dependent monooxygenase ptmM leads to a epoxidized-GGI that is substrate of the terpene cyclase ptmB for cyclization to yield paspaline. Paspaline is subsequently converted to 13-desoxypaxilline by the cytochrome P450 monooxygenase ptmP, the latter being then converted to paxilline by the cytochrome P450 monooxygenase ptmQ. Paxilline is converted to beta-paxitriol via C-10 ketoreduction by the short-chain dehydrogenase ptmH which can be monoprenylated at the C-20 by the indole diterpene prenyltransferase ptmD. A two-step elimination (acetylation and elimination) process performed by the O-acetyltransferase ptmV and ptmI leads to the production of the prenylated form of penijanthine. The FAD-linked oxidoreductase ptmO then converts the prenylated form of penijanthine into PC-M5 which is in turn transformed into PC-M4 by the aromatic dimethylallyltransferase ptmE. Five sequential oxidative transformations performed by the cytochrome P450 monooxygenases ptmK, ptmU, ptmL, ptmN and ptmJ yield the various penitrem compounds. PtmK, ptmU and ptmM are involved in the formation of the key bicyclic ring of penitrem C via the formation of the intermediates secopenitrem D and penitrem D. PtmL catalyzes the epoxidation of penitrem D and C to yield penitrem B and F, respectively. PtmJ catalyzes the last benzylic hydroxylation to convert penitrem B to prenitrem E and penitrem F to penitrem A. The sequence is that of Cytochrome P450 monooxygenase ptmQ from Penicillium ochrochloron.